Here is a 279-residue protein sequence, read N- to C-terminus: Undecaprenyl-diphosphatase (279 aa).

8 consecutive transmembrane segments (helical) span residues Leu2–Leu22, Ala44–Ile64, Trp85–Leu105, Phe113–Ile133, Val163–Leu183, Thr188–Leu208, Ala223–Ile243, and Phe255–Phe275.

It belongs to the UppP family.

It localises to the cell membrane. It carries out the reaction di-trans,octa-cis-undecaprenyl diphosphate + H2O = di-trans,octa-cis-undecaprenyl phosphate + phosphate + H(+). Functionally, catalyzes the dephosphorylation of undecaprenyl diphosphate (UPP). Confers resistance to bacitracin. This chain is Undecaprenyl-diphosphatase, found in Streptococcus pyogenes serotype M2 (strain MGAS10270).